The chain runs to 365 residues: MNKIDFRLEKTFGYTTGACAAAGSYSALYFLKNNKKLDFVEILNLKGDSLIIPIKNIEKQGNTAISTVEKFSGEDIDITNGMDIKIKVTLENMDNNCSKSSNVKIIGGTGVGFITKSGLQVKPGKPAINPKPREMIETNLKSLLKDNECVTVKISVPNGDEIAKKTLNPKLGIIGGISILGTTGIVRPMSNDAYKESLAPQIDVALANNFKNLIFVPGNIGTKHAKILLNAEEDQIIEVSNFWDHMLDKAKEKGVKDITVFGHAGKIVKLAGGIFDTHSRVADARNEILCAYTSLATQDVKILQKILQSNTTEDIVEILIEKGILTEVFEKVSKRVVERLSLRWEGINFSCIIIDMEGNILGKYV.

Belongs to the CbiD family.

It carries out the reaction Co-precorrin-5B + S-adenosyl-L-methionine = Co-precorrin-6A + S-adenosyl-L-homocysteine. Its pathway is cofactor biosynthesis; adenosylcobalamin biosynthesis; cob(II)yrinate a,c-diamide from sirohydrochlorin (anaerobic route): step 6/10. Catalyzes the methylation of C-1 in cobalt-precorrin-5B to form cobalt-precorrin-6A. This Methanococcus maripaludis (strain C5 / ATCC BAA-1333) protein is Cobalt-precorrin-5B C(1)-methyltransferase.